A 95-amino-acid chain; its full sequence is uncharacterized protein (95 aa).

Residues 60-89 are a coiled coil; that stretch reads VKNMINRIVEELDKRIDEIKEGLNELEKSG.

This is an uncharacterized protein from Sulfolobus islandicus filamentous virus (isolate Iceland/Hveragerdi) (SIFV).